A 327-amino-acid chain; its full sequence is Tetraacyldisaccharide 4'-kinase (327 aa).

52–59 is an ATP binding site; that stretch reads TAGGAGKT.

The protein belongs to the LpxK family.

The catalysed reaction is a lipid A disaccharide + ATP = a lipid IVA + ADP + H(+). Its pathway is glycolipid biosynthesis; lipid IV(A) biosynthesis; lipid IV(A) from (3R)-3-hydroxytetradecanoyl-[acyl-carrier-protein] and UDP-N-acetyl-alpha-D-glucosamine: step 6/6. Its function is as follows. Transfers the gamma-phosphate of ATP to the 4'-position of a tetraacyldisaccharide 1-phosphate intermediate (termed DS-1-P) to form tetraacyldisaccharide 1,4'-bis-phosphate (lipid IVA). The protein is Tetraacyldisaccharide 4'-kinase of Gluconacetobacter diazotrophicus (strain ATCC 49037 / DSM 5601 / CCUG 37298 / CIP 103539 / LMG 7603 / PAl5).